Reading from the N-terminus, the 258-residue chain is Leucyl/phenylalanyl-tRNA--protein transferase (258 aa).

Positions 199–220 (GGSDGPAPDQSIGMSSSGGVSD) are disordered. Over residues 209–220 (SIGMSSSGGVSD) the composition is skewed to low complexity.

Belongs to the L/F-transferase family.

Its subcellular location is the cytoplasm. It catalyses the reaction N-terminal L-lysyl-[protein] + L-leucyl-tRNA(Leu) = N-terminal L-leucyl-L-lysyl-[protein] + tRNA(Leu) + H(+). The enzyme catalyses N-terminal L-arginyl-[protein] + L-leucyl-tRNA(Leu) = N-terminal L-leucyl-L-arginyl-[protein] + tRNA(Leu) + H(+). The catalysed reaction is L-phenylalanyl-tRNA(Phe) + an N-terminal L-alpha-aminoacyl-[protein] = an N-terminal L-phenylalanyl-L-alpha-aminoacyl-[protein] + tRNA(Phe). Functionally, functions in the N-end rule pathway of protein degradation where it conjugates Leu, Phe and, less efficiently, Met from aminoacyl-tRNAs to the N-termini of proteins containing an N-terminal arginine or lysine. The protein is Leucyl/phenylalanyl-tRNA--protein transferase of Hyphomonas neptunium (strain ATCC 15444).